Reading from the N-terminus, the 349-residue chain is Isopentenyl-diphosphate delta-isomerase (349 aa).

9 to 10 (RK) is a substrate binding site. FMN contacts are provided by residues 65-67 (AMT), Ser95, and Asn124. Substrate is bound at residue 95–97 (STH). A substrate-binding site is contributed by Gln154. Position 155 (Glu155) interacts with Mg(2+). Residues Lys186, Ser211, Thr216, 262 to 264 (GLR), and 283 to 284 (SR) contribute to the FMN site.

The protein belongs to the IPP isomerase type 2 family. As to quaternary structure, homooctamer. Dimer of tetramers. Requires FMN as cofactor. It depends on NADPH as a cofactor. Mg(2+) is required as a cofactor.

Its subcellular location is the cytoplasm. It carries out the reaction isopentenyl diphosphate = dimethylallyl diphosphate. Involved in the biosynthesis of isoprenoids. Catalyzes the 1,3-allylic rearrangement of the homoallylic substrate isopentenyl (IPP) to its allylic isomer, dimethylallyl diphosphate (DMAPP). In Staphylococcus aureus (strain USA300 / TCH1516), this protein is Isopentenyl-diphosphate delta-isomerase.